Consider the following 201-residue polypeptide: Recombination protein RecR (201 aa).

The segment at 58–73 adopts a C4-type zinc-finger fold; sequence CEQCASITDTCPCRIC. In terms of domain architecture, Toprim spans 81–178; it reads DKLCLVSEWD…ELSRLAQGIP (98 aa).

The protein belongs to the RecR family.

Its function is as follows. May play a role in DNA repair. It seems to be involved in an RecBC-independent recombinational process of DNA repair. It may act with RecF and RecO. In Maridesulfovibrio salexigens (strain ATCC 14822 / DSM 2638 / NCIMB 8403 / VKM B-1763) (Desulfovibrio salexigens), this protein is Recombination protein RecR.